The following is a 262-amino-acid chain: MAAESGKVDPMKQFSIEPMLGSEGWEIAGYNIAFTNSAAWMALTTVLLAVFVWGGMKGQLVPGRWQMMVESFTSFIDDMLEVNIGKAGRKYVPYVFSLFMFILFGNLLGLLPLGVLGIHPFTFTSHFTITGVLAIISFSIVLIVGFWKHGFHFFSLFVPSGTPLPMIPIIFPIELISFLVRPFSLALRLFVAMMAGHVLLKVLSSFVIDGINAGAGFGLLVGAPSFILMIGISALEILVAGIQAYVFALLTSLYINDAENLH.

The next 6 membrane-spanning stretches (helical) occupy residues 32–52, 98–118, 127–147, 153–173, 189–209, and 219–239; these read IAFT…AVFV, LFMF…VLGI, FTIT…VGFW, FFSL…IFPI, LFVA…FVID, and LLVG…EILV.

This sequence belongs to the ATPase A chain family. As to quaternary structure, F-type ATPases have 2 components, CF(1) - the catalytic core - and CF(0) - the membrane proton channel. CF(1) has five subunits: alpha(3), beta(3), gamma(1), delta(1), epsilon(1). CF(0) has four main subunits: a, b, b' and c.

The protein resides in the cell inner membrane. Key component of the proton channel; it plays a direct role in the translocation of protons across the membrane. This chain is ATP synthase subunit a, found in Erythrobacter litoralis (strain HTCC2594).